The sequence spans 285 residues: NAD kinase (285 aa).

Catalysis depends on D66, which acts as the Proton acceptor. Residues 66-67, 137-138, R148, R165, D167, and 178-183 contribute to the NAD(+) site; these read DG, ND, and TAYSLS.

Belongs to the NAD kinase family. It depends on a divalent metal cation as a cofactor.

It localises to the cytoplasm. It catalyses the reaction NAD(+) + ATP = ADP + NADP(+) + H(+). Functionally, involved in the regulation of the intracellular balance of NAD and NADP, and is a key enzyme in the biosynthesis of NADP. Catalyzes specifically the phosphorylation on 2'-hydroxyl of the adenosine moiety of NAD to yield NADP. In Chlorobium phaeobacteroides (strain BS1), this protein is NAD kinase.